We begin with the raw amino-acid sequence, 318 residues long: Deoxyhypusine hydroxylase (318 aa).

HEAT-like PBS-type repeat units follow at residues 70-96 (LKHE…VLEN) and 103-129 (VRHE…YFKE). Residues H72, E73, H105, E106, H231, E232, H264, and E265 each coordinate Fe cation. One copy of the HEAT-like PBS-type 3 repeat lies at 262–288 (VRHEAAEALGSIATDECLPVLQSFLND).

It belongs to the deoxyhypusine hydroxylase family. Requires Fe(2+) as cofactor.

The protein resides in the cytoplasm. Its subcellular location is the nucleus. The enzyme catalyses [eIF5A protein]-deoxyhypusine + AH2 + O2 = [eIF5A protein]-hypusine + A + H2O. The protein operates within protein modification; eIF5A hypusination. In terms of biological role, catalyzes the hydroxylation of the N(6)-(4-aminobutyl)-L-lysine intermediate to form hypusine, an essential post-translational modification only found in mature eIF-5A factor. The polypeptide is Deoxyhypusine hydroxylase (Candida albicans (strain SC5314 / ATCC MYA-2876) (Yeast)).